Reading from the N-terminus, the 245-residue chain is Probable transcriptional regulatory protein BF2589 (245 aa).

Residues 225–245 (EDEDVQNVYTNMKPADNEGEE) form a disordered region.

The protein belongs to the TACO1 family.

The protein localises to the cytoplasm. The sequence is that of Probable transcriptional regulatory protein BF2589 from Bacteroides fragilis (strain ATCC 25285 / DSM 2151 / CCUG 4856 / JCM 11019 / LMG 10263 / NCTC 9343 / Onslow / VPI 2553 / EN-2).